Here is a 672-residue protein sequence, read N- to C-terminus: Rho GTPase-activating protein 40 (672 aa).

Positions 43–68 (GCSPGLSTGPTNLQQHPQKPRPADCS) are disordered. Over residues 47–59 (GLSTGPTNLQQHP) the composition is skewed to polar residues. The 199-residue stretch at 321-519 (VPLHSLLEAD…MMVQYQDLLW (199 aa)) folds into the Rho-GAP domain.

GTPase activator for the Rho-type GTPases by converting them to an inactive GDP-bound state. The sequence is that of Rho GTPase-activating protein 40 from Mus musculus (Mouse).